The primary structure comprises 105 residues: MNKFYIYNSFKHEALINVKVKPYAKQNLIGNFVIINNIPYIKLAIKATPEQGKANEGIIHYLAKEWELSRSSIEIIKGHTHSLKTILIKNINEDYLNLIINAYIK.

Belongs to the UPF0235 family.

In Rickettsia prowazekii (strain Madrid E), this protein is UPF0235 protein RP839.